Reading from the N-terminus, the 716-residue chain is Phosphoribosylformylglycinamidine synthase subunit PurL (716 aa).

His33 is a catalytic residue. Residue Tyr36 coordinates ATP. Glu77 is a binding site for Mg(2+). Substrate-binding positions include 78-81 (SHNH) and Arg100. His79 functions as the Proton acceptor in the catalytic mechanism. Asp101 provides a ligand contact to Mg(2+). Gln225 serves as a coordination point for substrate. Asp253 contributes to the Mg(2+) binding site. 297-299 (ESQ) is a binding site for substrate. Residues Asn475 and Gly512 each coordinate ATP. Residue Asn513 coordinates Mg(2+). Ser515 contributes to the substrate binding site.

Belongs to the FGAMS family. In terms of assembly, monomer. Part of the FGAM synthase complex composed of 1 PurL, 1 PurQ and 2 PurS subunits.

It is found in the cytoplasm. It catalyses the reaction N(2)-formyl-N(1)-(5-phospho-beta-D-ribosyl)glycinamide + L-glutamine + ATP + H2O = 2-formamido-N(1)-(5-O-phospho-beta-D-ribosyl)acetamidine + L-glutamate + ADP + phosphate + H(+). Its pathway is purine metabolism; IMP biosynthesis via de novo pathway; 5-amino-1-(5-phospho-D-ribosyl)imidazole from N(2)-formyl-N(1)-(5-phospho-D-ribosyl)glycinamide: step 1/2. In terms of biological role, part of the phosphoribosylformylglycinamidine synthase complex involved in the purines biosynthetic pathway. Catalyzes the ATP-dependent conversion of formylglycinamide ribonucleotide (FGAR) and glutamine to yield formylglycinamidine ribonucleotide (FGAM) and glutamate. The FGAM synthase complex is composed of three subunits. PurQ produces an ammonia molecule by converting glutamine to glutamate. PurL transfers the ammonia molecule to FGAR to form FGAM in an ATP-dependent manner. PurS interacts with PurQ and PurL and is thought to assist in the transfer of the ammonia molecule from PurQ to PurL. This Methanosarcina mazei (strain ATCC BAA-159 / DSM 3647 / Goe1 / Go1 / JCM 11833 / OCM 88) (Methanosarcina frisia) protein is Phosphoribosylformylglycinamidine synthase subunit PurL.